The chain runs to 523 residues: Polypyrimidine tract-binding protein 3 (523 aa).

Positions 1–25 (MNNSTSAGVYANGNDNKKFKGDRPP) are disordered. 3 consecutive RRM domains span residues 30-114 (RVLH…NLPN), 153-229 (LRII…FSKL), and 329-403 (SVLL…LSKH). Residue lysine 36 forms a Glycyl lysine isopeptide (Lys-Gly) (interchain with G-Cter in SUMO2) linkage. Tyrosine 98 is modified (phosphotyrosine). Threonine 109 bears the Phosphothreonine mark. Lysine 187 participates in a covalent cross-link: Glycyl lysine isopeptide (Lys-Gly) (interchain with G-Cter in SUMO2). Lysine 394 is modified (N6-acetyllysine). Residues 406 to 426 (VQLPREGQEDQGLTKDFSNSP) are disordered. Serine 425 carries the phosphoserine modification. One can recognise an RRM 4 domain in the interval 446 to 521 (ATLHLSNIPP…HHLRVSFSKS (76 aa)).

Interacts with THBS4 (via the acidic amphipathic C-terminus). In terms of tissue distribution, detected specifically in spleen, thymus, lungs, and bone marrow.

In terms of biological role, RNA-binding protein that mediates pre-mRNA alternative splicing regulation. Plays a role in the regulation of cell proliferation, differentiation and migration. Positive regulator of EPO-dependent erythropoiesis. Participates in cell differentiation regulation by repressing tissue-specific exons. Promotes Fas exon 6 skipping. Binds RNA, preferentially to both poly(G) and poly(U). This Rattus norvegicus (Rat) protein is Polypyrimidine tract-binding protein 3 (Ptbp3).